A 395-amino-acid polypeptide reads, in one-letter code: Tryptophan--tRNA ligase (395 aa).

Residues 8-10 and 16-17 contribute to the ATP site; these read RPT and GH. Positions 9–17 match the 'HIGH' region motif; the sequence is PTGKLHLGH. The insert stretch occupies residues 117–179; the sequence is RLTDLEKEFK…EIEPEILKRL (63 aa). Position 204 (Asp204) interacts with L-tryptophan. Residues 216-218, Ile254, and 261-265 contribute to the ATP site; these read GED and KMSKS. The short motif at 261-265 is the 'KMSKS' region element; it reads KMSKS.

This sequence belongs to the class-I aminoacyl-tRNA synthetase family. In terms of assembly, homodimer.

It is found in the cytoplasm. The catalysed reaction is tRNA(Trp) + L-tryptophan + ATP = L-tryptophyl-tRNA(Trp) + AMP + diphosphate + H(+). Catalyzes the attachment of tryptophan to tRNA(Trp). This chain is Tryptophan--tRNA ligase, found in Aquifex aeolicus (strain VF5).